The chain runs to 402 residues: Septin CDC11 (402 aa).

Met-1 is subject to N-acetylmethionine. Phosphoserine is present on Ser-4. Positions 14–21 match the Basic motif motif; the sequence is RKRKTLKK. The region spanning 21 to 307 is the Septin-type G domain; the sequence is KSINFSIMII…ENYRTEALSG (287 aa). The interval 31–38 is G1 motif; the sequence is GESGSGRS. Position 31 to 38 (31 to 38) interacts with GTP; it reads GESGSGRS. The G3 motif stretch occupies residues 89–92; it reads DTPN. The G4 motif stretch occupies residues 171–174; that stretch reads SKAD. GTP contacts are provided by residues 172–180 and Gly-233; that span reads KADSLTPKE. The stretch at 318–376 forms a coiled coil; sequence AKQEISESDYLMKEEQIKLEEERLRKFEERVHQDLINKRKELLERENELKEIEKRLLAE. Ser-394 carries the phosphoserine; by CDC28 modification. Phosphoserine; by GIN4 is present on Ser-395.

This sequence belongs to the TRAFAC class TrmE-Era-EngA-EngB-Septin-like GTPase superfamily. Septin GTPase family. Component of the septin complex which consists of CDC3, CDC10, CDC11, CDC12 and probably SEP7. The purified septin complex appeared to have a stoichiometry of 2 CDC3, 1 to 2 CDC10, 1 CDC11, 2 CDC12, and 1 or none SEP7 subunit. Interacts with HSL1. Hyphal induction causes immediate phosphorylation at Ser-395 by GIN4 and at Ser-394 by CDC28-CCN1. GIN4 phosphorylation at Ser-395 primes CDC11 for further phosphorylation by CDC28-CCN1. CDC28-HGC1 then maintains CDC11 phosphorylation throughout hyphal growth. Ser-4 is also phosphorylated in yeast cells but not hyphal cells. In terms of processing, met-1 is acetylated.

The protein resides in the bud neck. Septins are GTPases involved in cytokinesis that assemble early in the cell cycle as a patch at the incipient bud site and form a ring before bud emergence, which transforms into an hour-glass shaped collar of cortical filaments that spans both sides of the mother-bud neck. This collar persists until just before cytokinesis, when it splits into two rings that occupy opposite sides of the neck. The septins at the bud neck serve as a structural scaffold that recruits different components involved in diverse processes at specific stages during the cell cycle. Many proteins bind asymmetrically to the septin collar. The septin assembly is regulated by protein kinase GIN4. Septins are also involved in cell morphogenesis, chlamydospores morphogenesis, bud site selection, chitin deposition, cell cycle regulation, cell compartmentalization, and spore wall formation. CDC11 is required for the correct localization of SEC3 at bud tips and bud necks. Plays a key role in invasive growth and virulence. This Candida albicans (strain SC5314 / ATCC MYA-2876) (Yeast) protein is Septin CDC11 (CDC11).